The chain runs to 64 residues: SPbeta prophage-derived uncharacterized protein YoqI (64 aa).

This Bacillus subtilis (strain 168) protein is SPbeta prophage-derived uncharacterized protein YoqI (yoqI).